Consider the following 98-residue polypeptide: NADH-ubiquinone oxidoreductase chain 4L (98 aa).

A run of 3 helical transmembrane segments spans residues 1 to 21, 29 to 49, and 61 to 81; these read MPYIYMNITLAFVISLIGTLM, SLLCLEGMLLSLFTLNALLSL, and LILLVFAACEAAVGLALLVMI.

The protein belongs to the complex I subunit 4L family. As to quaternary structure, core subunit of respiratory chain NADH dehydrogenase (Complex I) which is composed of 45 different subunits.

The protein resides in the mitochondrion inner membrane. The enzyme catalyses a ubiquinone + NADH + 5 H(+)(in) = a ubiquinol + NAD(+) + 4 H(+)(out). Its function is as follows. Core subunit of the mitochondrial membrane respiratory chain NADH dehydrogenase (Complex I) which catalyzes electron transfer from NADH through the respiratory chain, using ubiquinone as an electron acceptor. Part of the enzyme membrane arm which is embedded in the lipid bilayer and involved in proton translocation. This is NADH-ubiquinone oxidoreductase chain 4L (MT-ND4L) from Elephas maximus (Indian elephant).